The chain runs to 161 residues: Phosphopantetheine adenylyltransferase (161 aa).

Position 11 (Ser11) interacts with substrate. ATP is bound by residues 11-12 (SF) and His19. Residues Lys43, Leu75, and Arg89 each coordinate substrate. ATP contacts are provided by residues 90–92 (GLR), Glu100, and 125–131 (YSYLSSS).

Belongs to the bacterial CoaD family. Homohexamer. Mg(2+) is required as a cofactor.

It localises to the cytoplasm. It carries out the reaction (R)-4'-phosphopantetheine + ATP + H(+) = 3'-dephospho-CoA + diphosphate. Its pathway is cofactor biosynthesis; coenzyme A biosynthesis; CoA from (R)-pantothenate: step 4/5. In terms of biological role, reversibly transfers an adenylyl group from ATP to 4'-phosphopantetheine, yielding dephospho-CoA (dPCoA) and pyrophosphate. This chain is Phosphopantetheine adenylyltransferase, found in Geotalea daltonii (strain DSM 22248 / JCM 15807 / FRC-32) (Geobacter daltonii).